The sequence spans 640 residues: Threonine--tRNA ligase (640 aa).

The region spanning 1 to 61 (MPTITLPDGS…ERDASLQIIT (61 aa)) is the TGS domain. Residues 242-533 (DHRRIGKQLD…LIEHYAGAFP (292 aa)) form a catalytic region. Positions 333, 384, and 510 each coordinate Zn(2+).

This sequence belongs to the class-II aminoacyl-tRNA synthetase family. As to quaternary structure, homodimer. Requires Zn(2+) as cofactor.

The protein resides in the cytoplasm. It catalyses the reaction tRNA(Thr) + L-threonine + ATP = L-threonyl-tRNA(Thr) + AMP + diphosphate + H(+). Functionally, catalyzes the attachment of threonine to tRNA(Thr) in a two-step reaction: L-threonine is first activated by ATP to form Thr-AMP and then transferred to the acceptor end of tRNA(Thr). Also edits incorrectly charged L-seryl-tRNA(Thr). This chain is Threonine--tRNA ligase, found in Stutzerimonas stutzeri (strain A1501) (Pseudomonas stutzeri).